We begin with the raw amino-acid sequence, 274 residues long: NH(3)-dependent NAD(+) synthetase (274 aa).

46 to 53 is an ATP binding site; sequence GISGGQDS. Asp-52 serves as a coordination point for Mg(2+). Residue Arg-140 coordinates deamido-NAD(+). Thr-160 is an ATP binding site. Glu-165 contacts Mg(2+). Residues Lys-173 and Asp-180 each contribute to the deamido-NAD(+) site. ATP-binding residues include Lys-189 and Thr-211. 260 to 261 is a binding site for deamido-NAD(+); the sequence is HK.

The protein belongs to the NAD synthetase family. In terms of assembly, homodimer.

It carries out the reaction deamido-NAD(+) + NH4(+) + ATP = AMP + diphosphate + NAD(+) + H(+). Its pathway is cofactor biosynthesis; NAD(+) biosynthesis; NAD(+) from deamido-NAD(+) (ammonia route): step 1/1. Catalyzes the ATP-dependent amidation of deamido-NAD to form NAD. Uses ammonia as a nitrogen source. This Streptococcus pyogenes serotype M6 (strain ATCC BAA-946 / MGAS10394) protein is NH(3)-dependent NAD(+) synthetase.